The primary structure comprises 283 residues: (+)-borneol dehydrogenase 2 (283 aa).

Residues 27-33 (GGSSGIG), Asp-51, 76-77 (DV), and 103-105 (NAG) contribute to the NAD(+) site. Ser-157 acts as the Proton donor in catalysis. NAD(+)-binding residues include Tyr-170, Lys-174, and Thr-205. Tyr-170 (proton acceptor) is an active-site residue. Lys-174 (proton donor/acceptor) is an active-site residue.

The protein belongs to the short-chain dehydrogenases/reductases (SDR) family.

The catalysed reaction is (1R,2S,4R)-borneol + NAD(+) = (1R,4R)-camphor + NADH + H(+). Its function is as follows. Involved in the biosynthesis of monoterpene natural products related to camphor. Catalayzes the oxidation of (+)-borneol to (+)-camphor. Shows absolute selectivity towards (+)-borneol. Catalyzes the oxidation of (+)-isoborneol to (-)-camphor. Shows absolute selectivity towards (+)-isoborneol. This is (+)-borneol dehydrogenase 2 from Salvia officinalis (Sage).